A 242-amino-acid chain; its full sequence is ATP synthase subunit a (242 aa).

6 consecutive transmembrane segments (helical) span residues 29–49 (SSIY…LAFY), 84–104 (FIPL…LGMT), 114–134 (IIVT…VGFI), 140–160 (FLTL…MIVI), 189–209 (VIAS…IPLM), and 210–230 (VILI…FTIL).

This sequence belongs to the ATPase A chain family. In terms of assembly, F-type ATPases have 2 components, CF(1) - the catalytic core - and CF(0) - the membrane proton channel. CF(1) has five subunits: alpha(3), beta(3), gamma(1), delta(1), epsilon(1). CF(0) has three main subunits: a(1), b(2) and c(9-12). The alpha and beta chains form an alternating ring which encloses part of the gamma chain. CF(1) is attached to CF(0) by a central stalk formed by the gamma and epsilon chains, while a peripheral stalk is formed by the delta and b chains.

Its subcellular location is the cell inner membrane. Key component of the proton channel; it plays a direct role in the translocation of protons across the membrane. This Rickettsia prowazekii (strain Madrid E) protein is ATP synthase subunit a.